A 279-amino-acid polypeptide reads, in one-letter code: Bifunctional protein FolD 1 (279 aa).

NADP(+) is bound by residues 166–168 (GRS) and Ser-191.

The protein belongs to the tetrahydrofolate dehydrogenase/cyclohydrolase family. As to quaternary structure, homodimer.

The catalysed reaction is (6R)-5,10-methylene-5,6,7,8-tetrahydrofolate + NADP(+) = (6R)-5,10-methenyltetrahydrofolate + NADPH. It catalyses the reaction (6R)-5,10-methenyltetrahydrofolate + H2O = (6R)-10-formyltetrahydrofolate + H(+). It functions in the pathway one-carbon metabolism; tetrahydrofolate interconversion. Its function is as follows. Catalyzes the oxidation of 5,10-methylenetetrahydrofolate to 5,10-methenyltetrahydrofolate and then the hydrolysis of 5,10-methenyltetrahydrofolate to 10-formyltetrahydrofolate. The chain is Bifunctional protein FolD 1 from Salinispora arenicola (strain CNS-205).